The sequence spans 180 residues: N-terminal acetyltransferase B complex catalytic subunit naa20 (180 aa).

Residues 2-156 (TDTRKFKATD…DSFDMRKPLS (155 aa)) form the N-acetyltransferase domain.

It belongs to the acetyltransferase family. Component of the N-terminal acetyltransferase B (NatB) complex.

It is found in the cytoplasm. It localises to the nucleus. It carries out the reaction N-terminal L-methionyl-L-asparaginyl-[protein] + acetyl-CoA = N-terminal N(alpha)-acetyl-L-methionyl-L-asparaginyl-[protein] + CoA + H(+). It catalyses the reaction N-terminal L-methionyl-L-glutaminyl-[protein] + acetyl-CoA = N-terminal N(alpha)-acetyl-L-methionyl-L-glutaminyl-[protein] + CoA + H(+). The catalysed reaction is N-terminal L-methionyl-L-aspartyl-[protein] + acetyl-CoA = N-terminal N(alpha)-acetyl-L-methionyl-L-aspartyl-[protein] + CoA + H(+). The enzyme catalyses N-terminal L-methionyl-L-glutamyl-[protein] + acetyl-CoA = N-terminal N(alpha)-acetyl-L-methionyl-L-glutamyl-[protein] + CoA + H(+). Functionally, catalytic subunit of the NatB N-terminal acetyltransferase, which catalyzes acetylation of the amino-terminal methionine residues of all proteins beginning with Met-Asp or Met-Glu and of some proteins beginning with Met-Asn, Met-Gln or Met-Met. In Schizosaccharomyces pombe (strain 972 / ATCC 24843) (Fission yeast), this protein is N-terminal acetyltransferase B complex catalytic subunit naa20 (naa20).